The following is a 369-amino-acid chain: Probable L-tyrosine/L-aspartate decarboxylase (369 aa).

Position 224 is an N6-(pyridoxal phosphate)lysine (K224).

It belongs to the group II decarboxylase family. MfnA subfamily. Requires pyridoxal 5'-phosphate as cofactor.

The catalysed reaction is L-tyrosine + H(+) = tyramine + CO2. It catalyses the reaction L-aspartate + H(+) = beta-alanine + CO2. Its pathway is cofactor biosynthesis; methanofuran biosynthesis. It functions in the pathway cofactor biosynthesis; coenzyme A biosynthesis. Its function is as follows. Catalyzes the decarboxylation of L-tyrosine to produce tyramine for methanofuran biosynthesis. Can also catalyze the decarboxylation of L-aspartate to produce beta-alanine for coenzyme A (CoA) biosynthesis. The protein is Probable L-tyrosine/L-aspartate decarboxylase of Methanospirillum hungatei JF-1 (strain ATCC 27890 / DSM 864 / NBRC 100397 / JF-1).